Here is an 816-residue protein sequence, read N- to C-terminus: Leucine--tRNA ligase (816 aa).

A 'HIGH' region motif is present at residues 40–51 (SYPSGSQLHAGH). A 'KMSKS' region motif is present at residues 576–580 (KMSKS). K579 is a binding site for ATP.

The protein belongs to the class-I aminoacyl-tRNA synthetase family.

The protein resides in the cytoplasm. It carries out the reaction tRNA(Leu) + L-leucine + ATP = L-leucyl-tRNA(Leu) + AMP + diphosphate. The protein is Leucine--tRNA ligase of Clostridium perfringens (strain ATCC 13124 / DSM 756 / JCM 1290 / NCIMB 6125 / NCTC 8237 / Type A).